A 101-amino-acid polypeptide reads, in one-letter code: NAD(P)H-quinone oxidoreductase subunit 4L, chloroplastic (101 aa).

3 helical membrane-spanning segments follow: residues 2–22, 32–52, and 61–81; these read ILEHVLVLSAYLFFIGLYGLI, MCLELILNAVNMNFVTFSDFF, and IFCIFVIAIAAAEAAIGLAIV.

The protein belongs to the complex I subunit 4L family. As to quaternary structure, NDH is composed of at least 16 different subunits, 5 of which are encoded in the nucleus.

Its subcellular location is the plastid. It is found in the chloroplast thylakoid membrane. It carries out the reaction a plastoquinone + NADH + (n+1) H(+)(in) = a plastoquinol + NAD(+) + n H(+)(out). It catalyses the reaction a plastoquinone + NADPH + (n+1) H(+)(in) = a plastoquinol + NADP(+) + n H(+)(out). In terms of biological role, NDH shuttles electrons from NAD(P)H:plastoquinone, via FMN and iron-sulfur (Fe-S) centers, to quinones in the photosynthetic chain and possibly in a chloroplast respiratory chain. The immediate electron acceptor for the enzyme in this species is believed to be plastoquinone. Couples the redox reaction to proton translocation, and thus conserves the redox energy in a proton gradient. The sequence is that of NAD(P)H-quinone oxidoreductase subunit 4L, chloroplastic from Aethionema cordifolium (Lebanon stonecress).